The chain runs to 31 residues: Diuretic hormone class 2 (31 aa).

P31 carries the proline amide modification.

Belongs to the diuretic hormone class 2 family.

It localises to the secreted. In terms of biological role, regulation of fluid secretion. Stimulates primary urine secretion by Malpighian tubules and causes a dose-dependent stimulation of cAMP levels in the tubules. Has a nonselective effect on Na(+)/K(+) ion transport. In vitro, primarily elevates intracellular Ca(2+). The chain is Diuretic hormone class 2 from Apis mellifera (Honeybee).